The primary structure comprises 192 residues: Fe/S biogenesis protein NfuA (192 aa).

The [4Fe-4S] cluster site is built by C149 and C152.

It belongs to the NfuA family. In terms of assembly, homodimer. It depends on [4Fe-4S] cluster as a cofactor.

Functionally, involved in iron-sulfur cluster biogenesis. Binds a 4Fe-4S cluster, can transfer this cluster to apoproteins, and thereby intervenes in the maturation of Fe/S proteins. Could also act as a scaffold/chaperone for damaged Fe/S proteins. The sequence is that of Fe/S biogenesis protein NfuA from Alteromonas mediterranea (strain DSM 17117 / CIP 110805 / LMG 28347 / Deep ecotype).